The chain runs to 240 residues: Adenosine 5'-phosphosulfate reductase (240 aa).

4 residues coordinate [4Fe-4S] cluster: C125, C126, C208, and C211. The Nucleophile; cysteine thiosulfonate intermediate role is filled by C234.

Belongs to the PAPS reductase family. CysH subfamily. [4Fe-4S] cluster is required as a cofactor.

It localises to the cytoplasm. The enzyme catalyses [thioredoxin]-disulfide + sulfite + AMP + 2 H(+) = adenosine 5'-phosphosulfate + [thioredoxin]-dithiol. It functions in the pathway sulfur metabolism; hydrogen sulfide biosynthesis; sulfite from sulfate. Catalyzes the formation of sulfite from adenosine 5'-phosphosulfate (APS) using thioredoxin as an electron donor. This Oceanobacillus iheyensis (strain DSM 14371 / CIP 107618 / JCM 11309 / KCTC 3954 / HTE831) protein is Adenosine 5'-phosphosulfate reductase.